Reading from the N-terminus, the 711-residue chain is Polyribonucleotide nucleotidyltransferase (711 aa).

The FFRR loop; important for RNA binding stretch occupies residues 77 to 80 (FFRR). Residues 327-331 (LDVRT) form an interaction with RNase E region. Mg(2+) contacts are provided by Asp486 and Asp492. The KH domain maps to 553–612 (PRIHTIKINPDKIKDVIGKGGSVIRALTEETGTTIEIEDDGTVKIAATDGEKAKHAIRRI). The region spanning 622–690 (GRVYTGKVTR…RQGRIRLSIK (69 aa)) is the S1 motif domain. The tract at residues 689–711 (IKEATEQSQPAAAPEAPAAEQGE) is disordered. Low complexity predominate over residues 694–711 (EQSQPAAAPEAPAAEQGE).

It belongs to the polyribonucleotide nucleotidyltransferase family. Component of the RNA degradosome, which is a multiprotein complex involved in RNA processing and mRNA degradation. Interacts with RNase E (rne). Homotrimer. The homotrimer forms a ring-like structure with a central channel, where RNA molecules can bind. RNA molecules bind between neighboring subunits. Might interact with YicC. Requires Mg(2+) as cofactor. It depends on Mn(2+) as a cofactor.

It is found in the cytoplasm. The enzyme catalyses RNA(n+1) + phosphate = RNA(n) + a ribonucleoside 5'-diphosphate. Involved in mRNA degradation. Catalyzes the phosphorolysis of single-stranded polyribonucleotides processively in the 3'- to 5'-direction. Also involved, along with RNase II, in tRNA processing. RNases II and R contribute to rRNA degradation during starvation, while RNase R and PNPase are the major contributors to quality control of rRNA during steady state growth. Contributes to degradation of some small RNAs (sRNA). The chain is Polyribonucleotide nucleotidyltransferase from Escherichia coli (strain K12).